A 278-amino-acid polypeptide reads, in one-letter code: Purine nucleoside phosphorylase YlmD (278 aa).

Zn(2+)-binding residues include histidine 87, cysteine 132, and histidine 149.

The protein belongs to the purine nucleoside phosphorylase YfiH/LACC1 family. As to quaternary structure, homodimer. Requires Cu(2+) as cofactor. The cofactor is Zn(2+).

It catalyses the reaction adenosine + phosphate = alpha-D-ribose 1-phosphate + adenine. It carries out the reaction S-methyl-5'-thioadenosine + phosphate = 5-(methylsulfanyl)-alpha-D-ribose 1-phosphate + adenine. The catalysed reaction is inosine + phosphate = alpha-D-ribose 1-phosphate + hypoxanthine. The enzyme catalyses adenosine + H2O + H(+) = inosine + NH4(+). Purine nucleoside enzyme that catalyzes the phosphorolysis of adenosine and inosine nucleosides, yielding D-ribose 1-phosphate and the respective free bases, adenine and hypoxanthine. Also catalyzes the phosphorolysis of S-methyl-5'-thioadenosine into adenine and S-methyl-5-thio-alpha-D-ribose 1-phosphate. Also has adenosine deaminase activity. This is Purine nucleoside phosphorylase YlmD (ylmD) from Bacillus subtilis (strain 168).